A 530-amino-acid polypeptide reads, in one-letter code: Transcriptional regulator VasH (530 aa).

In terms of domain architecture, Sigma-54 factor interaction spans 193 to 422; it reads LIGESAAMQK…LKHLIEFGCA (230 aa). Residues 221–228 and 284–293 each bind ATP; these read GETGTGKE and ANGGTLFLDE.

Its function is as follows. Transcriptional regulator of the type VI secretion system. This Vibrio cholerae serotype O1 (strain ATCC 39315 / El Tor Inaba N16961) protein is Transcriptional regulator VasH.